The chain runs to 471 residues: ATP synthase subunit beta (471 aa).

Position 153 to 160 (153 to 160 (GGAGVGKT)) interacts with ATP.

The protein belongs to the ATPase alpha/beta chains family. As to quaternary structure, F-type ATPases have 2 components, CF(1) - the catalytic core - and CF(0) - the membrane proton channel. CF(1) has five subunits: alpha(3), beta(3), gamma(1), delta(1), epsilon(1). CF(0) has four main subunits: a(1), b(1), b'(1) and c(9-12).

The protein resides in the cell membrane. It catalyses the reaction ATP + H2O + 4 H(+)(in) = ADP + phosphate + 5 H(+)(out). Its function is as follows. Produces ATP from ADP in the presence of a proton gradient across the membrane. The catalytic sites are hosted primarily by the beta subunits. In Chloroflexus aggregans (strain MD-66 / DSM 9485), this protein is ATP synthase subunit beta.